The primary structure comprises 936 residues: Lon protease homolog, mitochondrial (936 aa).

The N-terminal 40 residues, 1–40, are a transit peptide targeting the mitochondrion; the sequence is MYATRAIARRLERHAARCKGAHVARAVRGARARTTSAPRA. A disordered region spans residues 65–95; that stretch reads AFVSSVDGDGSTGSTGSSSSSSSSAFGDSAS. Low complexity predominate over residues 66-95; the sequence is FVSSVDGDGSTGSTGSSSSSSSSAFGDSAS. One can recognise a Lon N-terminal domain in the interval 112 to 352; the sequence is VLAVPLPRRP…ATLELLKKEV (241 aa). Residue 507–514 coordinates ATP; that stretch reads GPPGVGKT. The region spanning 748–932 is the Lon proteolytic domain; that stretch reads VTPPGVVTGL…DEVYRQALDW (185 aa). Active-site residues include Ser838 and Lys881.

Belongs to the peptidase S16 family. In terms of assembly, homohexamer or homoheptamer. Organized in a ring with a central cavity.

Its subcellular location is the mitochondrion matrix. The enzyme catalyses Hydrolysis of proteins in presence of ATP.. Functionally, ATP-dependent serine protease that mediates the selective degradation of misfolded, unassembled or oxidatively damaged polypeptides as well as certain short-lived regulatory proteins in the mitochondrial matrix. May also have a chaperone function in the assembly of inner membrane protein complexes. Participates in the regulation of mitochondrial gene expression and in the maintenance of the integrity of the mitochondrial genome. Binds to mitochondrial DNA in a site-specific manner. In Ostreococcus lucimarinus (strain CCE9901), this protein is Lon protease homolog, mitochondrial.